A 298-amino-acid chain; its full sequence is Aspartate carbamoyltransferase catalytic subunit (298 aa).

The carbamoyl phosphate site is built by R50 and T51. An L-aspartate-binding site is contributed by K79. Residues R100, H128, and Q131 each contribute to the carbamoyl phosphate site. 2 residues coordinate L-aspartate: R160 and R221. 2 residues coordinate carbamoyl phosphate: L260 and P261.

The protein belongs to the aspartate/ornithine carbamoyltransferase superfamily. ATCase family. Heterooligomer of catalytic and regulatory chains.

It catalyses the reaction carbamoyl phosphate + L-aspartate = N-carbamoyl-L-aspartate + phosphate + H(+). The protein operates within pyrimidine metabolism; UMP biosynthesis via de novo pathway; (S)-dihydroorotate from bicarbonate: step 2/3. Catalyzes the condensation of carbamoyl phosphate and aspartate to form carbamoyl aspartate and inorganic phosphate, the committed step in the de novo pyrimidine nucleotide biosynthesis pathway. In Methanospirillum hungatei JF-1 (strain ATCC 27890 / DSM 864 / NBRC 100397 / JF-1), this protein is Aspartate carbamoyltransferase catalytic subunit.